The primary structure comprises 640 residues: Fructose-1,6-bisphosphatase class 3 (640 aa).

It belongs to the FBPase class 3 family. Mn(2+) serves as cofactor.

The catalysed reaction is beta-D-fructose 1,6-bisphosphate + H2O = beta-D-fructose 6-phosphate + phosphate. It participates in carbohydrate biosynthesis; gluconeogenesis. The chain is Fructose-1,6-bisphosphatase class 3 from Lactococcus lactis subsp. lactis (strain IL1403) (Streptococcus lactis).